A 317-amino-acid polypeptide reads, in one-letter code: tRNA pseudouridine synthase B (317 aa).

Residue D47 is the Nucleophile of the active site.

The protein belongs to the pseudouridine synthase TruB family. Type 1 subfamily.

The catalysed reaction is uridine(55) in tRNA = pseudouridine(55) in tRNA. Its function is as follows. Responsible for synthesis of pseudouridine from uracil-55 in the psi GC loop of transfer RNAs. This is tRNA pseudouridine synthase B from Shewanella frigidimarina (strain NCIMB 400).